The chain runs to 238 residues: Neuromodulin (238 aa).

The interval 1–238 (MLCCMRRTKQ…EEPEADQEHA (238 aa)) is disordered. S-palmitoyl cysteine attachment occurs at residues cysteine 3 and cysteine 4. The span at 9-32 (KQVEKNDDDQKIEQDGIKPEDKAH) shows a compositional bias: basic and acidic residues. The IQ domain occupies 31-60 (AHKAATKIQASFRGHITRKKLKGEKKDDVQ). Serine 41 is modified (phosphoserine; by PHK and PKC). The segment covering 54–83 (EKKDDVQAAEAEANKKDEAPVADGVEKKGE) has biased composition (basic and acidic residues). Positions 84-95 (GTTTAEAAPATG) are enriched in low complexity. Over residues 97 to 116 (KPDEPGKAGETPSEEKKGEG) the composition is skewed to basic and acidic residues. Residues 119-130 (ATEQAAPQAPAS) show a composition bias toward low complexity. Polar residues predominate over residues 139-154 (ETESATKASTDNSPSS). Serine 151, serine 153, and serine 154 each carry phosphoserine. The segment covering 155–167 (KAEDAPAKEEPKQ) has biased composition (basic and acidic residues). Low complexity predominate over residues 168 to 199 (ADVPAAVTAAAATTPAAEDAAAKATAQPPTET). Threonine 181 carries the post-translational modification Phosphothreonine. 2 positions are modified to phosphoserine; by CK2: serine 202 and serine 203. The span at 213–225 (DETKPKESARQDE) shows a compositional bias: basic and acidic residues. The span at 226 to 238 (GKEEEPEADQEHA) shows a compositional bias: acidic residues.

This sequence belongs to the neuromodulin family. In terms of assembly, identified in a complex containing FGFR4, NCAM1, CDH2, PLCG1, FRS2, SRC, SHC1, GAP43 and CTTN. Interacts (via IQ domain) with calmodulin. Binds calmodulin with a greater affinity in the absence of Ca(2+) than in its presence. In terms of processing, phosphorylated. Phosphorylation of this protein by a protein kinase C is specifically correlated with certain forms of synaptic plasticity. Palmitoylated by ZDHHC3. Palmitoylation is regulated by ARF6 and is essential for plasma membrane association and axonal and dendritic filopodia induction. Deacylated by LYPLA2.

It localises to the cell membrane. Its subcellular location is the cell projection. The protein localises to the growth cone membrane. It is found in the synapse. The protein resides in the filopodium membrane. It localises to the perikaryon. Its subcellular location is the dendrite. The protein localises to the axon. It is found in the cytoplasm. Functionally, this protein is associated with nerve growth. It is a major component of the motile 'growth cones' that form the tips of elongating axons. Plays a role in axonal and dendritic filopodia induction. This chain is Neuromodulin (GAP43), found in Homo sapiens (Human).